Reading from the N-terminus, the 553-residue chain is MTADNDTRDWTEKYRPVSLADIVGNDAAVKALRQWAETFGTGKKAVILYGGPGVGKTSAALALAHDMGWDYIELNASDVRTKDAINRIAGPAAMAGTFEGTGGRRLVILDEADNLHGNYDRGGEAAIINVIRNASQPVILIANDMYAMSKPLRESALQIQFRAILSTSVAKVLRKVCANEGLKCDPEALMKIAERTNDLRSAINDLQAAAQGSGQVTVADVSTGDRDVPETIFKVMGMIFRGKNMREALNATYGLDENPEDLIGWVDENLPREYQDDDLERGFEALSRADVYLGRTRRRQDYGMWRYAGFMMVCGVNRARRRHYGGFSRYSPPTYWQKLGRAKSTRVTRDSIAAKVGKACHCSKAEARSTYLPLLRFLFDKDEYAIRLSAQLKLEEDEIAFLLDAKKASKKVGEIYKKSRALIEEEIEEEIDLFARFGKRPGKPEAGEPRESLFMAGEEEEKPSREKSAKLDAFGEIEKPKRKRRKAPDGGAPIEDGPEEPGEAPMAAAMPAATESFGPAGAPAPQESPLPEPEKPPAAEDKCSKKQRTLFDF.

50–57 (GGPGVGKT) is an ATP binding site. The segment at 438-553 (GKRPGKPEAG…SKKQRTLFDF (116 aa)) is disordered. A compositionally biased stretch (basic and acidic residues) spans 442 to 451 (GKPEAGEPRE). Over residues 503-513 (EAPMAAAMPAA) the composition is skewed to low complexity. Basic and acidic residues predominate over residues 532–553 (EPEKPPAAEDKCSKKQRTLFDF).

It belongs to the activator 1 small subunits family. RfcL subfamily. In terms of assembly, heteromultimer composed of small subunits (RfcS) and large subunits (RfcL).

Functionally, part of the RFC clamp loader complex which loads the PCNA sliding clamp onto DNA. The chain is Replication factor C large subunit from Methanocella arvoryzae (strain DSM 22066 / NBRC 105507 / MRE50).